Here is a 424-residue protein sequence, read N- to C-terminus: Arogenate dehydratase 3, chloroplastic (424 aa).

The transit peptide at 1-24 (MRTLLPSHTPATVTTAARRRHVIH) directs the protein to the chloroplast. Residues 57–71 (EQSESLSSNSNGSSS) are compositionally biased toward low complexity. The disordered stretch occupies residues 57–77 (EQSESLSSNSNGSSSYHVSAV). The region spanning 122 to 299 (RVAYQGVPGA…NVTRFVMLAR (178 aa)) is the Prephenate dehydratase domain. The ACT domain occupies 313–404 (SIVFAHEKGT…SFLRVLGSYP (92 aa)).

In terms of assembly, may interact with GPA1. As to expression, expressed in roots, leaves, stems, flowers and siliques.

It is found in the plastid. It localises to the chloroplast stroma. It carries out the reaction L-arogenate + H(+) = L-phenylalanine + CO2 + H2O. It participates in amino-acid biosynthesis; L-phenylalanine biosynthesis; L-phenylalanine from L-arogenate: step 1/1. Its function is as follows. Converts the prephenate produced from the shikimate-chorismate pathway into phenylalanine. Together with GCR1 and GPA1, required for blue light-mediated synthesis of phenylpyruvate and subsequently of phenylalanine (Phe), in etiolated seedlings. This chain is Arogenate dehydratase 3, chloroplastic, found in Arabidopsis thaliana (Mouse-ear cress).